The primary structure comprises 120 residues: Phosphoribosyl-AMP cyclohydrolase (120 aa).

D75 lines the Mg(2+) pocket. C76 serves as a coordination point for Zn(2+). Mg(2+) contacts are provided by D77 and D79. Positions 92 and 99 each coordinate Zn(2+).

Belongs to the PRA-CH family. In terms of assembly, homodimer. The cofactor is Mg(2+). It depends on Zn(2+) as a cofactor.

The protein localises to the cytoplasm. It carries out the reaction 1-(5-phospho-beta-D-ribosyl)-5'-AMP + H2O = 1-(5-phospho-beta-D-ribosyl)-5-[(5-phospho-beta-D-ribosylamino)methylideneamino]imidazole-4-carboxamide. It functions in the pathway amino-acid biosynthesis; L-histidine biosynthesis; L-histidine from 5-phospho-alpha-D-ribose 1-diphosphate: step 3/9. Its function is as follows. Catalyzes the hydrolysis of the adenine ring of phosphoribosyl-AMP. The polypeptide is Phosphoribosyl-AMP cyclohydrolase (Methanosarcina acetivorans (strain ATCC 35395 / DSM 2834 / JCM 12185 / C2A)).